A 773-amino-acid chain; its full sequence is Polyribonucleotide nucleotidyltransferase (773 aa).

2 residues coordinate Mg(2+): D532 and D538. Positions 598-657 constitute a KH domain; sequence PRVITIKVPVDKIGEVIGPKGKVINAITEETGAQISIEDDGTVFVGATDGLSAQAAINKI. In terms of domain architecture, S1 motif spans 669–738; the sequence is GERFLGTVVK…KRGKISLVLV (70 aa). Positions 749–773 are disordered; it reads APADAGAAQEFGSGTAPADAATASS.

It belongs to the polyribonucleotide nucleotidyltransferase family. It depends on Mg(2+) as a cofactor.

It localises to the cytoplasm. The catalysed reaction is RNA(n+1) + phosphate = RNA(n) + a ribonucleoside 5'-diphosphate. Involved in mRNA degradation. Catalyzes the phosphorolysis of single-stranded polyribonucleotides processively in the 3'- to 5'-direction. The sequence is that of Polyribonucleotide nucleotidyltransferase from Mycobacterium leprae (strain Br4923).